A 758-amino-acid chain; its full sequence is Polyribonucleotide nucleotidyltransferase (758 aa).

Mg(2+)-binding residues include Asp-482 and Asp-488. In terms of domain architecture, KH spans 549–608; that stretch reads PRVLSFYIDKDKISAAIGTKGKNIRSVCERSNAKIEIGDDGKVSVFAISSTEAEAAKNMM. An S1 motif domain is found at 618–686; sequence GSIIDAKVVK…KGGCPKLSRR (69 aa). The tract at residues 707-758 is disordered; that stretch reads DGLNNRDNYYNNSFNKKPEDNYHSNRPTRPRSGFSNRSRPKFGNNDSSSGFY. Residues 711 to 721 show a composition bias toward low complexity; that stretch reads NRDNYYNNSFN.

Belongs to the polyribonucleotide nucleotidyltransferase family. Mg(2+) serves as cofactor.

It localises to the cytoplasm. The enzyme catalyses RNA(n+1) + phosphate = RNA(n) + a ribonucleoside 5'-diphosphate. In terms of biological role, involved in mRNA degradation. Catalyzes the phosphorolysis of single-stranded polyribonucleotides processively in the 3'- to 5'-direction. This chain is Polyribonucleotide nucleotidyltransferase, found in Wolbachia pipientis subsp. Culex pipiens (strain wPip).